The following is a 624-amino-acid chain: Double-stranded RNA-binding protein Staufen homolog 2 (624 aa).

DRBM domains follow at residues 55 to 122 (STSI…NGLA), 142 to 228 (QRAN…SEIS), 254 to 321 (MKSF…PEYG), 354 to 422 (RRRE…IADQ), and 540 to 604 (LTCL…EKAD). The tract at residues 197–223 (LRNEPIPERSSLNGEANRGPEEDKDAN) is disordered. Residues 214 to 223 (RGPEEDKDAN) show a composition bias toward basic and acidic residues. 2 disordered regions span residues 401-428 (EKTGKRGENPDWDEQNSGIADQTSTPKG) and 592-624 (PFEQAKLRGEKADNKQANSGTIAQDCKDSKAVV). Positions 415–426 (QNSGIADQTSTP) are enriched in polar residues. A compositionally biased stretch (basic and acidic residues) spans 596–605 (AKLRGEKADN).

In terms of biological role, RNA-binding protein required for the microtubule-dependent transport of RNAs within polarized cell types. This chain is Double-stranded RNA-binding protein Staufen homolog 2 (stau2), found in Xenopus tropicalis (Western clawed frog).